The chain runs to 508 residues: Zinc finger CCCH-type with G patch domain-containing protein (508 aa).

Residues 67 to 86 form a disordered region; that stretch reads QQESSHHDSGTPETDTKTSV. The span at 69–86 shows a compositional bias: basic and acidic residues; the sequence is ESSHHDSGTPETDTKTSV. A C3H1-type zinc finger spans residues 161–188; it reads RSMVPCPYFLEGKCKFAGAECRFSHGYL. Positions 253-282 are disordered; that stretch reads IYPLGPEEVESDSESDSQSDTGDSSSSKAA. A compositionally biased stretch (acidic residues) spans 259 to 269; sequence EEVESDSESDS. Residues 270–279 show a composition bias toward low complexity; sequence QSDTGDSSSS. Residues 310–356 form the G-patch domain; it reads TKGIGSKLMAKMGYIFGKGLGKDGEGRVEPIEVVVLPQGKSLDKCAE. The disordered stretch occupies residues 404–426; that stretch reads SLHDLRVSHPGAKPDIRKTRKSA.

Its subcellular location is the nucleus. In terms of biological role, transcription repressor. This Nematostella vectensis (Starlet sea anemone) protein is Zinc finger CCCH-type with G patch domain-containing protein.